The chain runs to 79 residues: Acyl carrier protein (79 aa).

The Carrier domain occupies serine 2–glutamine 77. An O-(pantetheine 4'-phosphoryl)serine modification is found at serine 37.

The protein belongs to the acyl carrier protein (ACP) family. Post-translationally, 4'-phosphopantetheine is transferred from CoA to a specific serine of apo-ACP by AcpS. This modification is essential for activity because fatty acids are bound in thioester linkage to the sulfhydryl of the prosthetic group.

It localises to the cytoplasm. It participates in lipid metabolism; fatty acid biosynthesis. Functionally, carrier of the growing fatty acid chain in fatty acid biosynthesis. The protein is Acyl carrier protein of Paracidovorax citrulli (strain AAC00-1) (Acidovorax citrulli).